We begin with the raw amino-acid sequence, 373 residues long: MATSASSHLSKAIKHMYMKLPQGEKVQAMYIWIDGTGEHLRCKTRTLDHEPKSLEDLPEWNFDGSSTFQAEGSNSDMYLRPAAMFRDPFRKDPNKLVLCEVFKYNRQSADTNLRHTCRRIMDMVSNQHPWFGMEQEYTLLGTDGHPFGWPSNCFPGPQGPYYCGVGADKAYGRDIVEAHYRACLYAGVKIGGTNAEVMPAQWEFQVGPCEGIEMGDHLWIARFILHRVCEDFGVIVSFDPKPIPGNWNGAGCHTNFSTKNMREDGGLKHIEEAIEKLSKRHQYHIRAYDPKGGLDNARRLTGFHETSSIHEFSAGVANRGASIRIPRNVGHEKKGYFEDRGPSANCDPYAVTEALVRTCLLNETGDEPFEYKN.

The GS beta-grasp domain maps to 24–106 (EKVQAMYIWI…VLCEVFKYNR (83 aa)). The 261-residue stretch at 113–373 (LRHTCRRIMD…TGDEPFEYKN (261 aa)) folds into the GS catalytic domain. An ATP-binding site is contributed by Glu134. Glu134, Glu136, Glu196, and Glu203 together coordinate Mn(2+). Residue 203–208 (EFQVGP) coordinates ATP. 246-247 (NW) is a binding site for L-glutamate. His253 contributes to the Mn(2+) binding site. ATP-binding positions include 255–257 (NFS), Arg319, and Arg324. Arg319 is an L-glutamate binding site. 336 to 338 (YFE) serves as a coordination point for ADP. A Mn(2+)-binding site is contributed by Glu338. Arg340 lines the L-glutamate pocket.

Belongs to the glutamine synthetase family. In terms of assembly, homooctamer and homotetramer. It depends on biotin as a cofactor. Requires Mg(2+) as cofactor. The cofactor is Mn(2+). Expressed in retina, brain and liver. Little or no detectable expression in breast muscle, pancreas and spleen.

Its subcellular location is the cytoplasm. It is found in the mitochondrion. It catalyses the reaction L-glutamate + NH4(+) + ATP = L-glutamine + ADP + phosphate + H(+). It carries out the reaction L-glutamate + H(+) = 4-aminobutanoate + CO2. With respect to regulation, glutamate to glutamine ratio influences catalytic activity. At glutamate to glutamine ratios greater than 4, decarboxylase activity ceases. In the presence of manganese, synthetase activity is limited to concentrations between 10 mM and 20 mM, whereas decarboxylase activity is not affected. Both catalytic activities are inhibited by avidin. In terms of biological role, glutamine synthetase that catalyzes the ATP-dependent conversion of glutamate and ammonia to glutamine. When expressed in liver, it may be involved in detoxifying intramitochondrially generated ammonia. Also acts as glutamate decarboxylase by catalyzing the production of 4-aminobutanoate (gamma-aminobutyric acid, GABA) in a pyridoxal phosphate-independent manner. The sequence is that of Glutamine synthetase from Gallus gallus (Chicken).